Reading from the N-terminus, the 201-residue chain is IMP cyclohydrolase (201 aa).

It belongs to the archaeal IMP cyclohydrolase family.

It carries out the reaction IMP + H2O = 5-formamido-1-(5-phospho-D-ribosyl)imidazole-4-carboxamide. It participates in purine metabolism; IMP biosynthesis via de novo pathway; IMP from 5-formamido-1-(5-phospho-D-ribosyl)imidazole-4-carboxamide: step 1/1. In terms of biological role, catalyzes the cyclization of 5-formylamidoimidazole-4-carboxamide ribonucleotide to IMP. This is IMP cyclohydrolase from Methanocella arvoryzae (strain DSM 22066 / NBRC 105507 / MRE50).